We begin with the raw amino-acid sequence, 519 residues long: NADH dehydrogenase (519 aa).

The interval 1–183 (MVLEPQIKSQ…YLNGESFTSG (183 aa)) is membrane-binding. The interval 184 to 519 (RMTVEEILAQ…TTPAESAAAK (336 aa)) is catalytic. Position 210 to 241 (210 to 241 (DVLVVGGGPAGASSAIYAARKGIRTGIVADRF)) interacts with FAD. A disulfide bond links C337 and C340. 349 to 379 (DVAVIGGGNSGVEAAIDLAGIVNHVTVLEFM) lines the NAD(+) pocket. An FAD-binding site is contributed by 469-479 (TNVPGVFAAGD).

The protein belongs to the class-II pyridine nucleotide-disulfide oxidoreductase family. Homodimer. The cofactor is FAD.

It localises to the cell membrane. It carries out the reaction a ubiquinone + NADH + 5 H(+)(in) = a ubiquinol + NAD(+) + 4 H(+)(out). In terms of biological role, transfer of electrons from NADH to the respiratory chain. The immediate electron acceptor for the enzyme is believed to be ubiquinone. The polypeptide is NADH dehydrogenase (ahpF) (Ferdinandcohnia aciditolerans (strain JCM 32973 / CCTCC AB 2017280 / YN-1) (Bacillus aciditolerans)).